A 137-amino-acid chain; its full sequence is Allergen Ulo b 1 (137 aa).

An N-terminal signal peptide occupies residues 1-11 (SLFAAAGLAAA). Positions 28-137 (QGDYVWKISE…PKDFVCQGVS (110 aa)) constitute an AA1-like domain. 2 disulfide bridges follow: C67–C82 and C121–C133.

This sequence belongs to the ALTA1 family. In terms of assembly, homodimer; disulfide-linked.

The protein resides in the secreted. In Alternaria botrytis (Ulocladium botrytis), this protein is Allergen Ulo b 1.